The chain runs to 298 residues: Putative ankyrin repeat-containing protein TP_0502 (298 aa).

4 ANK repeats span residues 143–172 (CFEENFIATVMDGNIDIVNLFLDAGFSAAL), 176–205 (RGTPVLSLAVREGQDEMAAQLIARGAPVDQ), 210–239 (RAYSALMEAAQIGNRTVARLLLHAGADPNV), and 243–272 (NGQTALVLAVGRKDHVLIRLLMDHGANPYL).

The chain is Putative ankyrin repeat-containing protein TP_0502 from Treponema pallidum (strain Nichols).